We begin with the raw amino-acid sequence, 472 residues long: Poly(A) polymerase catalytic subunit (472 aa).

Active-site residues include D194 and D196.

Belongs to the poxviridae poly(A) polymerase catalytic subunit family. In terms of assembly, heterodimer of a large (catalytic) subunit and a small (regulatory) subunit.

The enzyme catalyses RNA(n) + ATP = RNA(n)-3'-adenine ribonucleotide + diphosphate. Polymerase that creates the 3'-poly(A) tail of mRNA's. In Fowlpox virus (strain NVSL) (FPV), this protein is Poly(A) polymerase catalytic subunit (PAPL).